Reading from the N-terminus, the 381-residue chain is Probable serine/threonine-protein kinase PBL21 (381 aa).

Residue C3 is the site of S-palmitoyl cysteine attachment. The Protein kinase domain maps to 78-354 (FREVNLLGEG…GDIVVALEYL (277 aa)). Residues 84–92 (LGEGGFGRV) and K106 contribute to the ATP site. D204 (proton acceptor) is an active-site residue. The segment at 362 to 381 (EARNVSSPSPEISRTPRRDL) is disordered.

Belongs to the protein kinase superfamily. Ser/Thr protein kinase family. Palmitoylation at Cys-3 and Cys-7 are required for plasma membrane location.

Its subcellular location is the cell membrane. The catalysed reaction is L-seryl-[protein] + ATP = O-phospho-L-seryl-[protein] + ADP + H(+). It catalyses the reaction L-threonyl-[protein] + ATP = O-phospho-L-threonyl-[protein] + ADP + H(+). May be involved in plant defense signaling. The protein is Probable serine/threonine-protein kinase PBL21 of Arabidopsis thaliana (Mouse-ear cress).